A 425-amino-acid chain; its full sequence is Caveolae-associated protein 2 (425 aa).

Positions 1–42 are disordered; that stretch reads MGEDAAQAEKFQHPGSDMRQEKPSSPSPMPSSTPSPSLNLGN. Gly-2 is subject to N-acetylglycine. The tract at residues 2 to 168 is interaction with CAVIN1; it reads GEDAAQAEKF…IFQEENEIPA (167 aa). The span at 10–22 shows a compositional bias: basic and acidic residues; the sequence is KFQHPGSDMRQEK. 4 positions are modified to phosphoserine: Ser-27, Ser-35, Ser-37, and Ser-51. 2 coiled-coil regions span residues 61–82 and 125–154; these read LLDKLVNMLDAVQENQHKMEQR and TRAVKERMDRQCAQVKRLENNHAQLLRRNH. The interval 62 to 100 is leucine-zipper; that stretch reads LDKLVNMLDAVQENQHKMEQRQISLEGSVKGIQNDLTKL. A phosphothreonine mark is found at Thr-196 and Thr-199. 2 disordered regions span residues 199-234 and 271-425; these read TVDLSSDDDLPHDEEALEDSAEEKVEESRAEKIKRS and IKKS…HQTS. Ser-203, Ser-204, and Ser-218 each carry phosphoserine. Positions 203–219 are enriched in acidic residues; sequence SSDDDLPHDEEALEDSA. A coiled-coil region spans residues 210–268; that stretch reads HDEEALEDSAEEKVEESRAEKIKRSSLKKVDSLKKAFSRQNIEKKMNKLGTKIVSVERR. A compositionally biased stretch (basic and acidic residues) spans 220–234; sequence EEKVEESRAEKIKRS. Polar residues predominate over residues 274–287; that stretch reads SLTSNHQKISSGKS. Phosphoserine is present on residues Ser-283, Ser-284, Ser-287, Ser-288, and Ser-293. The span at 303-317 shows a compositional bias: basic and acidic residues; sequence REGESHAENETKSED. A phosphoserine mark is found at Ser-332, Ser-341, Ser-366, and Ser-370. Thr-375 carries the post-translational modification Phosphothreonine. Residues 376–385 are compositionally biased toward acidic residues; it reads IVEDEEEESV. Position 395 is a phosphotyrosine (Tyr-395). The residue at position 403 (Ser-403) is a Phosphoserine.

It belongs to the CAVIN family. In terms of assembly, component of the CAVIN complex composed of CAVIN1, CAVIN2, CAVIN3 and CAVIN4. Binds to PRKCA in the presence of phosphatidylserine. Interacts with CAVIN4; this augments the transactivation of NPPA by CAVIN4. Interacts with CAVIN1. Interacts with CAV3. Post-translationally, phosphorylated on Ser residues. Highly expressed in heart and lung, and expressed at lower levels in brain, kidney, liver, pancreas, placenta, and skeletal muscle.

Its subcellular location is the cytoplasm. The protein resides in the cytosol. It is found in the membrane. The protein localises to the caveola. In terms of biological role, plays an important role in caveolar biogenesis and morphology. Regulates caveolae morphology by inducing membrane curvature within caveolae. Plays a role in caveola formation in a tissue-specific manner. Required for the formation of caveolae in the lung and fat endothelia but not in the heart endothelia. Negatively regulates the size or stability of CAVIN complexes in the lung endothelial cells. May play a role in targeting PRKCA to caveolae. The sequence is that of Caveolae-associated protein 2 from Homo sapiens (Human).